The sequence spans 516 residues: Bifunctional purine biosynthesis protein PurH (516 aa).

Residues 1–146 enclose the MGS-like domain; that stretch reads MTRLALLSVS…KNYAHVTVLS (146 aa).

Belongs to the PurH family.

The enzyme catalyses (6R)-10-formyltetrahydrofolate + 5-amino-1-(5-phospho-beta-D-ribosyl)imidazole-4-carboxamide = 5-formamido-1-(5-phospho-D-ribosyl)imidazole-4-carboxamide + (6S)-5,6,7,8-tetrahydrofolate. The catalysed reaction is IMP + H2O = 5-formamido-1-(5-phospho-D-ribosyl)imidazole-4-carboxamide. The protein operates within purine metabolism; IMP biosynthesis via de novo pathway; 5-formamido-1-(5-phospho-D-ribosyl)imidazole-4-carboxamide from 5-amino-1-(5-phospho-D-ribosyl)imidazole-4-carboxamide (10-formyl THF route): step 1/1. Its pathway is purine metabolism; IMP biosynthesis via de novo pathway; IMP from 5-formamido-1-(5-phospho-D-ribosyl)imidazole-4-carboxamide: step 1/1. The protein is Bifunctional purine biosynthesis protein PurH of Rippkaea orientalis (strain PCC 8801 / RF-1) (Cyanothece sp. (strain PCC 8801)).